Here is a 179-residue protein sequence, read N- to C-terminus: MLCAGNGGKELPRAKVFEGGSLVSKDYEDLKRRYFGTEHGNVLFLDPFETVYLTEKGEIDPETPEGEPMSVEELLSFFERRRPGFRAGYVVYRDLTERGYVVKSGFKYGGRFRVYEEDPDREHSKYVVRVVEPDTELSTRDVLRATRLAHSVRKDFVLAVVEDVEEPRIEYVMWRWKRL.

Residues Tyr-115, His-123, and Lys-154 contribute to the active site.

Belongs to the tRNA-intron endonuclease family. Archaeal short subfamily. As to quaternary structure, homotetramer; although the tetramer contains four active sites, only two participate in the cleavage. Therefore, it should be considered as a dimer of dimers.

It catalyses the reaction pretRNA = a 3'-half-tRNA molecule with a 5'-OH end + a 5'-half-tRNA molecule with a 2',3'-cyclic phosphate end + an intron with a 2',3'-cyclic phosphate and a 5'-hydroxyl terminus.. Its function is as follows. Endonuclease that removes tRNA introns. Cleaves pre-tRNA at the 5'- and 3'-splice sites to release the intron. The products are an intron and two tRNA half-molecules bearing 2',3' cyclic phosphate and 5'-OH termini. Recognizes a pseudosymmetric substrate in which 2 bulged loops of 3 bases are separated by a stem of 4 bp. The sequence is that of tRNA-splicing endonuclease from Methanopyrus kandleri (strain AV19 / DSM 6324 / JCM 9639 / NBRC 100938).